A 775-amino-acid polypeptide reads, in one-letter code: E3 ubiquitin-protein ligase UHRF1 (775 aa).

In terms of domain architecture, Ubiquitin-like spans 1–77; that stretch reads MWIQVRTMDG…IVQLLVRQIP (77 aa). Residues 81–128 are disordered; the sequence is PTKDKECGISDADSGCGSGQGESDKNSSCGEGATDVDGQPAGINSENV. 2 tudor-like regions span residues 131-207 and 214-283; these read SLYK…LRAR and DLKV…IEEP. Residues 293 to 301 are linker; sequence PQKRQNGPE. The segment at 299–366 adopts a PHD-type zinc-finger fold; that stretch reads GPECKHCKDN…DWYCPDCRND (68 aa). 2 histone H3R2me0 binding regions span residues 333–337 and 353–355; these read CDECD and PQD. A YDG domain is found at 419 to 582; the sequence is GPIPGVPVGT…FLVWRYLLRR (164 aa). Residues 445-446 are required to promote base flipping; the sequence is HV. DNA contacts are provided by residues 463–464 and Asp469; that span reads AG. 2 required for formation of a 5-methylcytosine-binding pocket regions span residues 466–469 and 478–481; these read YEDD and YTGS. The segment covering 616–628 has biased composition (basic and acidic residues); sequence ASKEREKENKTED. Residues 616–655 form a disordered region; the sequence is ASKEREKENKTEDELSESPSKGKRKRNSAGSGLSDAKSTP. The RING-type zinc finger occupies 706–745; it reads CICCQEVVYEPITTECHHNICKGCLDRSFKALVHNCPACR.

It is found in the nucleus. It carries out the reaction S-ubiquitinyl-[E2 ubiquitin-conjugating enzyme]-L-cysteine + [acceptor protein]-L-lysine = [E2 ubiquitin-conjugating enzyme]-L-cysteine + N(6)-ubiquitinyl-[acceptor protein]-L-lysine.. It functions in the pathway protein modification; protein ubiquitination. In terms of biological role, multidomain protein that acts as a key epigenetic regulator by bridging DNA methylation and chromatin modification. Specifically recognizes and binds hemimethylated DNA at replication forks via its YDG domain and recruits dnmt1 methyltransferase to ensure faithful propagation of the DNA methylation patterns through DNA replication. In addition to its role in maintenance of DNA methylation, also plays a key role in chromatin modification: through its tudor-like regions and PHD-type zinc fingers, specifically recognizes and binds histone H3 trimethylated at 'Lys-9' (H3K9me3) and unmethylated at 'Arg-2' (H3R2me0), respectively, and recruits chromatin proteins. Enriched in pericentric heterochromatin where it recruits different chromatin modifiers required for this chromatin replication. Also localizes to euchromatic regions where it negatively regulates transcription possibly by impacting DNA methylation and histone modifications. Has E3 ubiquitin-protein ligase activity by mediating the ubiquitination of target proteins. However, it is still unclear how E3 ubiquitin-protein ligase activity is related to its role in chromatin in vivo. The polypeptide is E3 ubiquitin-protein ligase UHRF1 (uhrf1) (Xenopus tropicalis (Western clawed frog)).